Consider the following 127-residue polypeptide: Small ribosomal subunit protein uS12m (127 aa).

It belongs to the universal ribosomal protein uS12 family.

The protein localises to the mitochondrion. In terms of biological role, protein S12 is involved in the translation initiation step. This is Small ribosomal subunit protein uS12m (RPS12) from Chondrus crispus (Carrageen Irish moss).